Reading from the N-terminus, the 135-residue chain is Small ribosomal subunit protein bS16m (135 aa).

The N-terminal 34 residues, 1–34, are a transit peptide targeting the mitochondrion; sequence MVQLTTIFCKAYHGGHLTIRLALGGCTNRPFYRI.

It belongs to the bacterial ribosomal protein bS16 family. In terms of assembly, component of the mitochondrial ribosome small subunit (28S) which comprises a 12S rRNA and about 30 distinct proteins.

It localises to the mitochondrion. The protein is Small ribosomal subunit protein bS16m (Mrps16) of Mus musculus (Mouse).